A 221-amino-acid chain; its full sequence is Orotidine 5'-phosphate decarboxylase (221 aa).

Substrate-binding positions include Asp12, Lys34, 60 to 69 (DFKVADIPNT), Ser117, 170 to 180 (PGVGAQGGKAS), Gly193, and Arg194. Catalysis depends on Lys62, which acts as the Proton donor.

Belongs to the OMP decarboxylase family. Type 1 subfamily. Homodimer.

It catalyses the reaction orotidine 5'-phosphate + H(+) = UMP + CO2. Its pathway is pyrimidine metabolism; UMP biosynthesis via de novo pathway; UMP from orotate: step 2/2. Functionally, catalyzes the decarboxylation of orotidine 5'-monophosphate (OMP) to uridine 5'-monophosphate (UMP). The sequence is that of Orotidine 5'-phosphate decarboxylase from Methanosarcina acetivorans (strain ATCC 35395 / DSM 2834 / JCM 12185 / C2A).